The sequence spans 474 residues: ATP synthase subunit beta (474 aa).

153-160 (GGAGVGKT) is a binding site for ATP.

Belongs to the ATPase alpha/beta chains family. As to quaternary structure, F-type ATPases have 2 components, CF(1) - the catalytic core - and CF(0) - the membrane proton channel. CF(1) has five subunits: alpha(3), beta(3), gamma(1), delta(1), epsilon(1). CF(0) has three main subunits: a(1), b(2) and c(9-12). The alpha and beta chains form an alternating ring which encloses part of the gamma chain. CF(1) is attached to CF(0) by a central stalk formed by the gamma and epsilon chains, while a peripheral stalk is formed by the delta and b chains.

It localises to the cell inner membrane. It catalyses the reaction ATP + H2O + 4 H(+)(in) = ADP + phosphate + 5 H(+)(out). Produces ATP from ADP in the presence of a proton gradient across the membrane. The catalytic sites are hosted primarily by the beta subunits. The sequence is that of ATP synthase subunit beta from Rickettsia typhi (strain ATCC VR-144 / Wilmington).